The primary structure comprises 264 residues: Ubiquinone biosynthesis protein COQ4 homolog, mitochondrial (264 aa).

A mitochondrion-targeting transit peptide spans 1–26 (MMQRCWQISLPLARRRLIPSLTSKRT). Zn(2+) is bound by residues His169, Asp170, His173, and Glu185.

The protein belongs to the COQ4 family. Component of a multi-subunit COQ enzyme complex. Zn(2+) is required as a cofactor.

Its subcellular location is the mitochondrion inner membrane. It carries out the reaction a 4-hydroxy-3-methoxy-5-(all-trans-polyprenyl)benzoate + H(+) = a 2-methoxy-6-(all-trans-polyprenyl)phenol + CO2. It participates in cofactor biosynthesis; ubiquinone biosynthesis. Functionally, lyase that catalyzes the C1-decarboxylation of 4-hydroxy-3-methoxy-5-(all-trans-polyprenyl)benzoic acid into 2-methoxy-6-(all-trans-polyprenyl)phenol during ubiquinone biosynthesis. In Drosophila grimshawi (Hawaiian fruit fly), this protein is Ubiquinone biosynthesis protein COQ4 homolog, mitochondrial.